Here is a 443-residue protein sequence, read N- to C-terminus: ATP-dependent protease ATPase subunit HslU (443 aa).

Residues I18, 60–65 (GVGKTE), D256, E321, and R393 each bind ATP.

The protein belongs to the ClpX chaperone family. HslU subfamily. As to quaternary structure, a double ring-shaped homohexamer of HslV is capped on each side by a ring-shaped HslU homohexamer. The assembly of the HslU/HslV complex is dependent on binding of ATP.

It localises to the cytoplasm. ATPase subunit of a proteasome-like degradation complex; this subunit has chaperone activity. The binding of ATP and its subsequent hydrolysis by HslU are essential for unfolding of protein substrates subsequently hydrolyzed by HslV. HslU recognizes the N-terminal part of its protein substrates and unfolds these before they are guided to HslV for hydrolysis. The protein is ATP-dependent protease ATPase subunit HslU of Wigglesworthia glossinidia brevipalpis.